The following is a 247-amino-acid chain: Segregation and condensation protein A (247 aa).

The protein belongs to the ScpA family. Component of a cohesin-like complex composed of ScpA, ScpB and the Smc homodimer, in which ScpA and ScpB bind to the head domain of Smc. The presence of the three proteins is required for the association of the complex with DNA.

The protein localises to the cytoplasm. Participates in chromosomal partition during cell division. May act via the formation of a condensin-like complex containing Smc and ScpB that pull DNA away from mid-cell into both cell halves. In Bacillus cereus (strain AH187), this protein is Segregation and condensation protein A.